The primary structure comprises 474 residues: Aspartyl/glutamyl-tRNA(Asn/Gln) amidotransferase subunit B (474 aa).

It belongs to the GatB/GatE family. GatB subfamily. In terms of assembly, heterotrimer of A, B and C subunits.

It catalyses the reaction L-glutamyl-tRNA(Gln) + L-glutamine + ATP + H2O = L-glutaminyl-tRNA(Gln) + L-glutamate + ADP + phosphate + H(+). The catalysed reaction is L-aspartyl-tRNA(Asn) + L-glutamine + ATP + H2O = L-asparaginyl-tRNA(Asn) + L-glutamate + ADP + phosphate + 2 H(+). Allows the formation of correctly charged Asn-tRNA(Asn) or Gln-tRNA(Gln) through the transamidation of misacylated Asp-tRNA(Asn) or Glu-tRNA(Gln) in organisms which lack either or both of asparaginyl-tRNA or glutaminyl-tRNA synthetases. The reaction takes place in the presence of glutamine and ATP through an activated phospho-Asp-tRNA(Asn) or phospho-Glu-tRNA(Gln). This chain is Aspartyl/glutamyl-tRNA(Asn/Gln) amidotransferase subunit B, found in Lactiplantibacillus plantarum (strain ATCC BAA-793 / NCIMB 8826 / WCFS1) (Lactobacillus plantarum).